Consider the following 156-residue polypeptide: ATP synthase subunit b', chloroplastic (156 aa).

A helical membrane pass occupies residues 20–42; that stretch reads NGTLPLMALQFLTLMVLLNTIFY.

The protein belongs to the ATPase B chain family. F-type ATPases have 2 components, F(1) - the catalytic core - and F(0) - the membrane proton channel. F(1) has five subunits: alpha(3), beta(3), gamma(1), delta(1), epsilon(1). F(0) has four main subunits: a(1), b(1), b'(1) and c(10-14). The alpha and beta chains form an alternating ring which encloses part of the gamma chain. F(1) is attached to F(0) by a central stalk formed by the gamma and epsilon chains, while a peripheral stalk is formed by the delta, b and b' chains.

It is found in the plastid. Its subcellular location is the chloroplast thylakoid membrane. Functionally, f(1)F(0) ATP synthase produces ATP from ADP in the presence of a proton or sodium gradient. F-type ATPases consist of two structural domains, F(1) containing the extramembraneous catalytic core and F(0) containing the membrane proton channel, linked together by a central stalk and a peripheral stalk. During catalysis, ATP synthesis in the catalytic domain of F(1) is coupled via a rotary mechanism of the central stalk subunits to proton translocation. In terms of biological role, component of the F(0) channel, it forms part of the peripheral stalk, linking F(1) to F(0). The b'-subunit is a diverged and duplicated form of b found in plants and photosynthetic bacteria. In Pyropia yezoensis (Susabi-nori), this protein is ATP synthase subunit b', chloroplastic.